Here is an 88-residue protein sequence, read N- to C-terminus: MITKEQKAQIVAKYGANKKDTGNIFVQIAILTAEIEDLKPHFLANPKDNHSRRGFIAKITKRRILLQHLKKENFELYNKVLAELNLRK.

This sequence belongs to the universal ribosomal protein uS15 family. Part of the 30S ribosomal subunit. Forms a bridge to the 50S subunit in the 70S ribosome, contacting the 23S rRNA.

Its function is as follows. One of the primary rRNA binding proteins, it binds directly to 16S rRNA where it helps nucleate assembly of the platform of the 30S subunit by binding and bridging several RNA helices of the 16S rRNA. Forms an intersubunit bridge (bridge B4) with the 23S rRNA of the 50S subunit in the ribosome. The sequence is that of Small ribosomal subunit protein uS15 from Mycoplasmopsis agalactiae (strain NCTC 10123 / CIP 59.7 / PG2) (Mycoplasma agalactiae).